A 134-amino-acid chain; its full sequence is SNAPIN protein homolog (134 aa).

Residues 50-124 (QLQAELRGQL…EKEQRRRQAL (75 aa)) are a coiled coil.

Belongs to the SNAPIN family. As to quaternary structure, component of the biogenesis of lysosome-related organelles complex-1 (BLOC-1) composed of Blos1, Blos2, Blos3, Blos4, Dysb, Muted, Pldn and Snapin. Interacts with Blos2 and Dysb.

Its subcellular location is the membrane. It localises to the cytoplasm. The protein localises to the cytosol. Functionally, component of the biogenesis of lysosome-related organelles complex-1 (BLOC-1) involved in pigment granule biogenesis. May participate in the coupling of lysosomes to microtubule plus-end-directed kinesin motor. The sequence is that of SNAPIN protein homolog from Drosophila melanogaster (Fruit fly).